A 218-amino-acid polypeptide reads, in one-letter code: Probable GTP-binding protein EngB (218 aa).

The EngB-type G domain maps to 21–192 (NAPQIALAGR…WQELHRLAFP (172 aa)). GTP is bound by residues 29–36 (GRSNVGKS), 56–60 (GKTRS), 75–78 (DLPG), 142–145 (TKAD), and 171–173 (FSS). Mg(2+) contacts are provided by Ser36 and Thr58. The disordered stretch occupies residues 194-218 (MAFDTPSDGAPEPADEPEAASERAE).

The protein belongs to the TRAFAC class TrmE-Era-EngA-EngB-Septin-like GTPase superfamily. EngB GTPase family. Mg(2+) serves as cofactor.

In terms of biological role, necessary for normal cell division and for the maintenance of normal septation. The sequence is that of Probable GTP-binding protein EngB from Oleidesulfovibrio alaskensis (strain ATCC BAA-1058 / DSM 17464 / G20) (Desulfovibrio alaskensis).